Consider the following 290-residue polypeptide: MRLLVISGRSGSGKTSALHLLEDEGFTCIDNLPVKLLPALIEQIGDAPHASKHKFAIGIDARNLNSDLSQIESLIKDNLPANAECLVVYLDTSREVLLKRFSETRRKHPLSDQNTGLNEAIAKEKVILEPVAAAADITVDTSHMSLHELRSTIKRLVVGEESKGMAIMFKSFGFKYGVPVDADFIFDVRCLPNPYWSPELRSQSGLEAGVIEFLNSQQEVDDMFDDICAFVQKWAPSFQANNRSYLTVAIGCTGGMHRSVYLAERLAAELKKGYANVQTRHRQLEQKPGA.

G8–T15 contacts ATP. D60 to N63 contacts GTP.

This sequence belongs to the RapZ-like family.

Displays ATPase and GTPase activities. The protein is Nucleotide-binding protein Sde_3181 of Saccharophagus degradans (strain 2-40 / ATCC 43961 / DSM 17024).